The chain runs to 430 residues: Serine--tRNA ligase (430 aa).

L-serine is bound at residue 236-238 (TAE). 267–269 (RRE) provides a ligand contact to ATP. E290 is an L-serine binding site. 354 to 357 (EISS) contributes to the ATP binding site. Residue S390 participates in L-serine binding.

Belongs to the class-II aminoacyl-tRNA synthetase family. Type-1 seryl-tRNA synthetase subfamily. In terms of assembly, homodimer. The tRNA molecule binds across the dimer.

Its subcellular location is the cytoplasm. The catalysed reaction is tRNA(Ser) + L-serine + ATP = L-seryl-tRNA(Ser) + AMP + diphosphate + H(+). It catalyses the reaction tRNA(Sec) + L-serine + ATP = L-seryl-tRNA(Sec) + AMP + diphosphate + H(+). It functions in the pathway aminoacyl-tRNA biosynthesis; selenocysteinyl-tRNA(Sec) biosynthesis; L-seryl-tRNA(Sec) from L-serine and tRNA(Sec): step 1/1. In terms of biological role, catalyzes the attachment of serine to tRNA(Ser). Is also able to aminoacylate tRNA(Sec) with serine, to form the misacylated tRNA L-seryl-tRNA(Sec), which will be further converted into selenocysteinyl-tRNA(Sec). The chain is Serine--tRNA ligase from Gloeothece citriformis (strain PCC 7424) (Cyanothece sp. (strain PCC 7424)).